The primary structure comprises 266 residues: HTH-type transcriptional regulator MurR (266 aa).

Residues 1-77 enclose the HTH rpiR-type domain; the sequence is MLYLTKIRNA…MALIGEYSAS (77 aa). Residues 37–56 constitute a DNA-binding region (H-T-H motif); sequence SRQMAKQLGISQSSIVKFAQ. The SIS domain occupies 128–266; the sequence is IIEVISKAPF…LLFVGLVQHQ (139 aa).

In terms of assembly, homotetramer.

The protein operates within amino-sugar metabolism; N-acetylmuramate degradation [regulation]. Represses the expression of the murPQ operon involved in the uptake and degradation of N-acetylmuramic acid (MurNAc). Binds to two adjacent inverted repeats within the operator region. MurNAc 6-phosphate, the substrate of MurQ, is the specific inducer that weakens binding of MurR to the operator. The sequence is that of HTH-type transcriptional regulator MurR from Shigella flexneri serotype 5b (strain 8401).